The primary structure comprises 1041 residues: Integrator complex subunit 3 (1041 aa).

Methionine 1 carries the N-acetylmethionine modification. Residues serine 500, serine 535, and serine 993 each carry the phosphoserine modification. The tract at residues 975–1041 (YEDSSTKPPK…GSSAVGSDSD (67 aa)) is disordered. A compositionally biased stretch (acidic residues) spans 1006–1020 (AEEESGSSSASEEED).

It belongs to the Integrator subunit 3 family. As to quaternary structure, component of the Integrator complex, composed of core subunits INTS1, INTS2, INTS3, INTS4, INTS5, INTS6, INTS7, INTS8, INTS9/RC74, INTS10, INTS11/CPSF3L, INTS12, INTS13, INTS14 and INTS15. The core complex associates with protein phosphatase 2A subunits PPP2CA and PPP2R1A, to form the Integrator-PP2A (INTAC) complex. Component of the SOSS complex, composed of SOSS-B (SOSS-B1/NABP2 or SOSS-B2/NABP1), SOSS-A/INTS3 and SOSS-C/INIP. SOSS complexes containing SOSS-B1/NABP2 are more abundant than complexes containing SOSS-B2/NABP1. Interacts with SOSS-B1/NABP2, SOSS-B2/NABP1 and SOSS-C/INIP; the interaction is direct. Interacts with NBN/NBS1.

Its subcellular location is the nucleus. It is found in the cytoplasm. In terms of biological role, component of the integrator complex, a multiprotein complex that terminates RNA polymerase II (Pol II) transcription in the promoter-proximal region of genes. The integrator complex provides a quality checkpoint during transcription elongation by driving premature transcription termination of transcripts that are unfavorably configured for transcriptional elongation: the complex terminates transcription by (1) catalyzing dephosphorylation of the C-terminal domain (CTD) of Pol II subunit POLR2A/RPB1 and SUPT5H/SPT5, (2) degrading the exiting nascent RNA transcript via endonuclease activity and (3) promoting the release of Pol II from bound DNA. The integrator complex is also involved in terminating the synthesis of non-coding Pol II transcripts, such as enhancer RNAs (eRNAs), small nuclear RNAs (snRNAs), telomerase RNAs and long non-coding RNAs (lncRNAs). Within the integrator complex, INTS3 is involved in the post-termination step: INTS3 binds INTS7 in the open conformation of integrator complex and prevents the rebinding of Pol II to the integrator after termination cycle. Mediates recruitment of cytoplasmic dynein to the nuclear envelope, probably as component of the integrator complex. Functionally, component of the SOSS complex, a multiprotein complex that functions downstream of the MRN complex to promote DNA repair and G2/M checkpoint. The SOSS complex associates with single-stranded DNA at DNA lesions and influences diverse endpoints in the cellular DNA damage response including cell-cycle checkpoint activation, recombinational repair and maintenance of genomic stability. The SOSS complex is required for efficient homologous recombination-dependent repair of double-strand breaks (DSBs) and ATM-dependent signaling pathways. In the SOSS complex, it is required for the assembly of the complex and for stabilization of the complex at DNA damage sites. The protein is Integrator complex subunit 3 (Ints3) of Mus musculus (Mouse).